Reading from the N-terminus, the 534-residue chain is Serine/threonine-protein kinase 35 (534 aa).

Residues 32–176 (VESHGSLGAQ…AAAARAMDPV (145 aa)) form a disordered region. Low complexity-rich tracts occupy residues 39 to 65 (GAQASPASAAAAEGSATRRARAATSRA) and 166 to 176 (PAAAARAMDPV). The region spanning 202-530 (YSLLAEIGRG…FELETRMDQV (329 aa)) is the Protein kinase domain. Residues 208–216 (IGRGSYGVV) and Lys-231 contribute to the ATP site. Catalysis depends on Asp-360, which acts as the Proton acceptor.

This sequence belongs to the protein kinase superfamily. Ser/Thr protein kinase family. As to quaternary structure, interacts with PDLIM1/CLP-36. Autophosphorylated. Expressed in testis.

The protein localises to the nucleus. It localises to the nucleolus. The protein resides in the cytoplasm. It carries out the reaction L-seryl-[protein] + ATP = O-phospho-L-seryl-[protein] + ADP + H(+). It catalyses the reaction L-threonyl-[protein] + ATP = O-phospho-L-threonyl-[protein] + ADP + H(+). This is Serine/threonine-protein kinase 35 (STK35) from Homo sapiens (Human).